Reading from the N-terminus, the 324-residue chain is Membrane protein UL8 (324 aa).

An immunoglobulin V-like domain region spans residues 36-138 (ILESIIYVSG…LWYNLTVKPK (103 aa)). The helical transmembrane segment at 278 to 298 (THYSWMLIIAIILIIFIIICL) threads the bilayer.

Belongs to the RL11 family. Post-translationally, highly glycosylated.

Its subcellular location is the host cell membrane. Its function is as follows. Plays a role in the inhibition of pro-inflammatory cytokine production. This effect is mediated by the conserved Ig-like domain. The chain is Membrane protein UL8 (UL8) from Homo sapiens (Human).